Here is a 320-residue protein sequence, read N- to C-terminus: Glutathione synthetase (320 aa).

Residues 127–312 (KLAITEFPRF…VAGLMIDALE (186 aa)) enclose the ATP-grasp domain. ATP is bound at residue 153 to 209 (LAEHEDIILKPLDGMGGAGIFRIQNTDHNIGVIIETLTRYGTRTIMAQRFLPEIREG). Residues Glu-283 and Asn-285 each coordinate Mg(2+).

It belongs to the prokaryotic GSH synthase family. The cofactor is Mg(2+). Requires Mn(2+) as cofactor.

The enzyme catalyses gamma-L-glutamyl-L-cysteine + glycine + ATP = glutathione + ADP + phosphate + H(+). It participates in sulfur metabolism; glutathione biosynthesis; glutathione from L-cysteine and L-glutamate: step 2/2. The polypeptide is Glutathione synthetase (Nitrosomonas europaea (strain ATCC 19718 / CIP 103999 / KCTC 2705 / NBRC 14298)).